We begin with the raw amino-acid sequence, 95 residues long: 6 kDa early secretory antigenic target homolog (95 aa).

This sequence belongs to the WXG100 family. ESAT-6 subfamily. Forms a tight 1:1 complex with EsxB.

Its subcellular location is the secreted. In terms of biological role, a secreted protein that might play a role in virulence. The protein is 6 kDa early secretory antigenic target homolog (esxA) of Mycobacterium leprae (strain TN).